The primary structure comprises 217 residues: Pyridoxine/pyridoxamine 5'-phosphate oxidase (217 aa).

Substrate is bound by residues 13–16 (RRDY) and Lys71. Residues 66–71 (RIVLLK), 81–82 (YT), Lys88, and Gln110 contribute to the FMN site. Substrate is bound by residues Tyr128, Arg132, and Ser136. Residues 145–146 (QS) and Trp190 each bind FMN. Position 196-198 (196-198 (RLH)) interacts with substrate. An FMN-binding site is contributed by Arg200.

This sequence belongs to the pyridoxamine 5'-phosphate oxidase family. In terms of assembly, homodimer. Requires FMN as cofactor.

The catalysed reaction is pyridoxamine 5'-phosphate + O2 + H2O = pyridoxal 5'-phosphate + H2O2 + NH4(+). It carries out the reaction pyridoxine 5'-phosphate + O2 = pyridoxal 5'-phosphate + H2O2. It functions in the pathway cofactor metabolism; pyridoxal 5'-phosphate salvage; pyridoxal 5'-phosphate from pyridoxamine 5'-phosphate: step 1/1. It participates in cofactor metabolism; pyridoxal 5'-phosphate salvage; pyridoxal 5'-phosphate from pyridoxine 5'-phosphate: step 1/1. Catalyzes the oxidation of either pyridoxine 5'-phosphate (PNP) or pyridoxamine 5'-phosphate (PMP) into pyridoxal 5'-phosphate (PLP). The sequence is that of Pyridoxine/pyridoxamine 5'-phosphate oxidase from Edwardsiella ictaluri (strain 93-146).